The primary structure comprises 150 residues: MGKSILLINGPNLNLLGTREPHIYGSTTLPDIVASSKAHAESLGATLEAFQSNHEGAIVDRIQEARGNVDGIVINPGAFTHTSVAIRDALLAVNIPFIELHVSNVHAREPWRHHSYFSDKAAGIIVGLGAYGYKVAVEHVALNFKERASL.

Y24 (proton acceptor) is an active-site residue. Substrate is bound by residues N75, H81, and D88. Residue H101 is the Proton donor of the active site. Substrate is bound by residues 102-103 (VS) and R112.

This sequence belongs to the type-II 3-dehydroquinase family. In terms of assembly, homododecamer. Adopts a ring-like structure, composed of an arrangement of two hexameric rings stacked on top of one another.

It carries out the reaction 3-dehydroquinate = 3-dehydroshikimate + H2O. It functions in the pathway aromatic compound metabolism; 3,4-dihydroxybenzoate biosynthesis; 3,4-dihydroxybenzoate from 3-dehydroquinate: step 1/2. In terms of biological role, is involved in the catabolism of quinate. Allows the utilization of quinate as carbon source via the beta-ketoadipate pathway. In Aspergillus clavatus (strain ATCC 1007 / CBS 513.65 / DSM 816 / NCTC 3887 / NRRL 1 / QM 1276 / 107), this protein is Catabolic 3-dehydroquinase.